The primary structure comprises 514 residues: 2,3-bisphosphoglycerate-independent phosphoglycerate mutase (514 aa).

Mn(2+) contacts are provided by Asp14 and Ser64. The Phosphoserine intermediate role is filled by Ser64. Residues His125, 155 to 156 (RD), Arg187, Arg193, 263 to 266 (RADR), and Lys336 contribute to the substrate site. Mn(2+)-binding residues include Asp403, His407, Asp444, His445, and His463.

The protein belongs to the BPG-independent phosphoglycerate mutase family. In terms of assembly, monomer. The cofactor is Mn(2+).

The enzyme catalyses (2R)-2-phosphoglycerate = (2R)-3-phosphoglycerate. It participates in carbohydrate degradation; glycolysis; pyruvate from D-glyceraldehyde 3-phosphate: step 3/5. Catalyzes the interconversion of 2-phosphoglycerate and 3-phosphoglycerate. This is 2,3-bisphosphoglycerate-independent phosphoglycerate mutase from Shewanella sp. (strain MR-7).